A 272-amino-acid chain; its full sequence is Indole-3-glycerol phosphate synthase (272 aa).

It belongs to the TrpC family.

It carries out the reaction 1-(2-carboxyphenylamino)-1-deoxy-D-ribulose 5-phosphate + H(+) = (1S,2R)-1-C-(indol-3-yl)glycerol 3-phosphate + CO2 + H2O. It functions in the pathway amino-acid biosynthesis; L-tryptophan biosynthesis; L-tryptophan from chorismate: step 4/5. In Mycobacterium sp. (strain JLS), this protein is Indole-3-glycerol phosphate synthase.